A 120-amino-acid chain; its full sequence is U13-lycotoxin-Ls1a (120 aa).

The N-terminal stretch at 1-16 (MKTLFVLISILYAVYC) is a signal peptide. A propeptide spanning residues 17-54 (FSSEEDVDSAYLANELEPVEDINSEQYAALEPKEEQER) is cleaved from the precursor. Intrachain disulfides connect Cys56-Cys70, Cys63-Cys76, Cys69-Cys87, and Cys78-Cys85. The Agouti domain occupies 56-95 (CADMGQDCKDDCDCCLNIATCNCWFGRYFCSCTFGDYQTC).

Belongs to the neurotoxin 05 (agouti) family. In terms of processing, contains 6 disulfide bonds. As to expression, expressed by the venom gland.

It is found in the secreted. This Lycosa singoriensis (Wolf spider) protein is U13-lycotoxin-Ls1a.